We begin with the raw amino-acid sequence, 372 residues long: GDP-mannose 4,6-dehydratase (372 aa).

Residues 8–13 (GITGQD), 63–64 (DL), 85–89 (LGAQS), and Tyr-100 contribute to the NADP(+) site. Residue Thr-132 is part of the active site. Catalysis depends on nucleophile residues Glu-134 and Tyr-156. Lys-160, His-186, and Arg-191 together coordinate NADP(+).

This sequence belongs to the NAD(P)-dependent epimerase/dehydratase family. GDP-mannose 4,6-dehydratase subfamily. NADP(+) serves as cofactor.

It catalyses the reaction GDP-alpha-D-mannose = GDP-4-dehydro-alpha-D-rhamnose + H2O. Its pathway is bacterial outer membrane biogenesis; LPS O-antigen biosynthesis. It participates in nucleotide-sugar biosynthesis; GDP-L-fucose biosynthesis via de novo pathway; GDP-L-fucose from GDP-alpha-D-mannose: step 1/2. Catalyzes the conversion of GDP-D-mannose to GDP-4-dehydro-6-deoxy-D-mannose. The sequence is that of GDP-mannose 4,6-dehydratase from Yersinia enterocolitica serotype O:8 / biotype 1B (strain NCTC 13174 / 8081).